Here is a 389-residue protein sequence, read N- to C-terminus: Chorismate synthase (389 aa).

Residues R40 and R46 each contribute to the NADP(+) site. FMN contacts are provided by residues 130-132 (RAS), 251-252 (QA), G297, 312-316 (KPIST), and R338.

Belongs to the chorismate synthase family. Homotetramer. Requires FMNH2 as cofactor.

It catalyses the reaction 5-O-(1-carboxyvinyl)-3-phosphoshikimate = chorismate + phosphate. Its pathway is metabolic intermediate biosynthesis; chorismate biosynthesis; chorismate from D-erythrose 4-phosphate and phosphoenolpyruvate: step 7/7. Its function is as follows. Catalyzes the anti-1,4-elimination of the C-3 phosphate and the C-6 proR hydrogen from 5-enolpyruvylshikimate-3-phosphate (EPSP) to yield chorismate, which is the branch point compound that serves as the starting substrate for the three terminal pathways of aromatic amino acid biosynthesis. This reaction introduces a second double bond into the aromatic ring system. The protein is Chorismate synthase of Solibacter usitatus (strain Ellin6076).